The primary structure comprises 1464 residues: Neuropathy target esterase sws (1464 aa).

The Lumenal segment spans residues 1 to 34 (MDVLELLRASATGCYNTIFSEAWHQYVHKQIAAA). The helical transmembrane segment at 35–55 (VYWYGALFLLGVLLFVWFLYF) threads the bilayer. At 56–1464 (KRLARLRLRD…GNTTNNDTKN (1409 aa)) the chain is on the cytoplasmic side. 176–303 (IFGHFEKPIF…IRVIQVIMIR (128 aa)) is a binding site for a nucleoside 3',5'-cyclic phosphate. Disordered regions lie at residues 329–393 (NKNS…LHYH) and 409–438 (QQQQSLNSPRRNSTAHVSEAAAASTASSPT). Low complexity predominate over residues 338 to 367 (TGQTTSNVQSQTSQATQSRPSGTTRTPTSP). The span at 409–420 (QQQQSLNSPRRN) shows a compositional bias: polar residues. At Ser421 the chain carries Phosphoserine. Positions 422 to 438 (TAHVSEAAAASTASSPT) are enriched in low complexity. A nucleoside 3',5'-cyclic phosphate-binding positions include 456–586 (ELGL…VVRR) and 575–702 (IVLG…LSHR). The PNPLA domain occupies 928 to 1094 (LVLGGGGARG…VNNLPGHLWR (167 aa)). Residues 932 to 937 (GGGARG) carry the GXGXXG motif. A GXSXG motif is present at residues 959-963 (GVSIG). The active-site Nucleophile is Ser961. Residue Asp1081 is the Proton acceptor of the active site. Residues 1081 to 1083 (DGG) carry the DGA/G motif. Ser1175 carries the post-translational modification Phosphoserine. 2 disordered regions span residues 1352–1374 (VDKATQSTPTLPDKRSVQTPTPS) and 1400–1464 (ATNT…DTKN). Residues 1429–1444 (KRTEQDEHELEHEQVV) are compositionally biased toward basic and acidic residues. The span at 1450-1464 (MDKQQGNTTNNDTKN) shows a compositional bias: polar residues.

The protein belongs to the NTE family. As to quaternary structure, interacts with Pka-C3; interaction inhibits the catalytic function of Pka-C3 and the esterase activity of sws.

The protein resides in the endoplasmic reticulum membrane. The enzyme catalyses a 1-acyl-sn-glycero-3-phosphocholine + H2O = sn-glycerol 3-phosphocholine + a fatty acid + H(+). Functionally, phospholipase B that deacylates intracellular phosphatidylcholine (PtdCho), generating glycerophosphocholine (GroPtdCho). This deacylation occurs at both sn-2 and sn-1 positions of PtdCho. Its specific chemical modification by certain organophosphorus (OP) compounds leads to distal axonopathy. Plays a role in the signaling mechanism between neurons and glia that regulates glia wrapping during development of the adult brain. Essential for membrane lipid homeostasis and cell survival in both neurons and glia of the adult brain. This Drosophila grimshawi (Hawaiian fruit fly) protein is Neuropathy target esterase sws.